Reading from the N-terminus, the 173-residue chain is Nicotinamide-nucleotide adenylyltransferase (173 aa).

This sequence belongs to the archaeal NMN adenylyltransferase family.

Its subcellular location is the cytoplasm. The enzyme catalyses beta-nicotinamide D-ribonucleotide + ATP + H(+) = diphosphate + NAD(+). It participates in cofactor biosynthesis; NAD(+) biosynthesis; NAD(+) from nicotinamide D-ribonucleotide: step 1/1. The chain is Nicotinamide-nucleotide adenylyltransferase from Methanosarcina acetivorans (strain ATCC 35395 / DSM 2834 / JCM 12185 / C2A).